Consider the following 507-residue polypeptide: Glutamyl-tRNA(Gln) amidotransferase subunit A, mitochondrial (507 aa).

The tract at residues 29–51 (THPPEPIPPPPPPAPSSSPSPKQ) is disordered. The segment covering 31–46 (PPEPIPPPPPPAPSSS) has biased composition (pro residues). Active-site charge relay system residues include Lys-57 and Ser-135. The active-site Acyl-ester intermediate is Ser-159.

The protein belongs to the amidase family. GatA subfamily. In terms of assembly, subunit of the heterotrimeric GatCAB amidotransferase (AdT) complex, composed of A, B and C subunits.

It localises to the mitochondrion. The enzyme catalyses L-glutamyl-tRNA(Gln) + L-glutamine + ATP + H2O = L-glutaminyl-tRNA(Gln) + L-glutamate + ADP + phosphate + H(+). Its function is as follows. Allows the formation of correctly charged Gln-tRNA(Gln) through the transamidation of misacylated Glu-tRNA(Gln) in the mitochondria. The reaction takes place in the presence of glutamine and ATP through an activated gamma-phospho-Glu-tRNA(Gln). This is Glutamyl-tRNA(Gln) amidotransferase subunit A, mitochondrial from Podospora anserina (strain S / ATCC MYA-4624 / DSM 980 / FGSC 10383) (Pleurage anserina).